Reading from the N-terminus, the 1356-residue chain is MLLPSDVARLVLGYLQQEKLSSTCRSFILESPNLREYAEHYTDEGSIPGCVLSLFGKNLTTILNEYIAMKAKENKEEIPVMVSALWKKLDHTLSQIRSMQNCLVLPTSQKVRTRYGIQDLRHQRMLTSHAASTGSAVALQQTSTPIAAKQVMLRSFTSQSASQTIVSPLCSGQSTIQCTNSPATESKGETLQNSALSDAEKKQTSSPMRRKTDCQRRRRAAPLNSSSATHEGETEGNVDSLQDLIDGNFPQLVIENAREKILSNKSLQEKLAENINKFLGSDTATQASKLSEGGALEQYTSIDEILGLQGGEMHMSEEAIHDILEQTELDPDFQELYDLFACSSTKPTKLASRDPSLQTEGVATTSIHVANDNLEPMESSFDASVDTSHSSNHSEVGAAQKKDGRSQLVVPSPTPKVTESTGMPSKVQEMPISASERQSMSDRSVESKKSIDSVIILDNTGSDTVIESNEEVQVTSMEVGISQSQDVDMNVLHTEVIGADCQLAVEQGSLNMLTVDLTVPNLKEETPKMQTYEKASEAKKSSPLKDEVQALGSRRLERNKSEGAEGPCTTESQNIVVLVSIGSTVTESNLLNQRGDLPATPRKTDTSTETTVSEQMQAESSITSKELKVLQKQASKTPPHPMVPPISPSIKGSSSDSDGSSLPLEVSSSVGVSTPVNTSNVEQNCSDVSSVDPSQIITLSFITEDIAEDAELTKAVKSISERSNSALLLSPFHKPQESSSIVSIPGPTSETLTLLADPREVVNVSGDVATGVKPAEDCTIISLPGASNLSTDGGIIQLMPATSSSFAPSGSFFISTCNTGGAQQSNIMVVPSNCAPASTQKQPCHFQTPPRPHSVYTVGQAISPKLSQGSTFILASAVQPVLPGVMGMFPVSVVGQSSNTFTTPSHQVLHVPVSQGVPKLSLPPKSQKPVPPRTLASAAEKQGTAATTDSGNRKSSSRMQRSENVDKNLAAMSQNKPEERQTSTTNPSTKGTENHKRVLCFENTAANRGTPNTKSLCNSAAPQNKDKVETMNTSSSSLPAKQNNKDSGKADKTAPSTEANSKCESVPSKQPVVPATKDLSGDKKPVAVASSPDVLGGVMANKENMLQKENKKQELPEVSKKSSTADGAAGNLERTVQAVHETGRKHATLPSILRRTKLSTERMCPPSPLTKQASDLLQSMQFNSPNAKHFSGGDLPIPRTPGSGIDDRLVDSHQDHMKTPKSKRYPEDGGTPKPMLPPATPELPACSPASETGSENSVNMAAHTLMILSRATLAKTDGSSPLKDNTQQIKLSKNSSKKRKLDEPDEYGRRPHKKELMSPSAILKRKKMKKHRKKSTDDFPAGMDVDKFLMSLHYDE.

Residues 3–35 form the LisH domain; sequence LPSDVARLVLGYLQQEKLSSTCRSFILESPNLR. 3 stretches are compositionally biased toward polar residues: residues 180–196, 381–394, and 607–624; these read NSPA…NSAL, FDAS…SNHS, and STET…SITS. Disordered regions lie at residues 180–242, 379–446, 589–688, 916–1092, 1107–1130, 1180–1258, and 1276–1342; these read NSPA…DSLQ, SSFD…RSVE, NLLN…CSDV, GVPK…ASSP, QKEN…GAAG, MQFN…ENSV, and TDGS…FPAG. Residues 638–647 show a composition bias toward pro residues; that stretch reads PPHPMVPPIS. A compositionally biased stretch (low complexity) spans 648 to 664; it reads PSIKGSSSDSDGSSLPL. Residues 666 to 688 are compositionally biased toward polar residues; sequence VSSSVGVSTPVNTSNVEQNCSDV. Residues 917-928 are compositionally biased toward low complexity; that stretch reads VPKLSLPPKSQK. Composition is skewed to polar residues over residues 944–959, 982–991, 1004–1022, and 1030–1042; these read TAAT…SSRM, TSTTNPSTKG, TAAN…SAAP, and TMNT…PAKQ. Residues 1043-1052 are compositionally biased toward basic and acidic residues; it reads NNKDSGKADK. Residues 1054 to 1063 show a composition bias toward polar residues; that stretch reads APSTEANSKC. Composition is skewed to basic and acidic residues over residues 1107-1120 and 1205-1218; these read QKEN…EVSK and IDDR…DHMK. 2 stretches are compositionally biased toward polar residues: residues 1249–1258 and 1277–1289; these read ASETGSENSV and DGSS…TQQI. Positions 1300–1309 are enriched in basic and acidic residues; that stretch reads KLDEPDEYGR. A compositionally biased stretch (basic residues) spans 1323–1334; sequence LKRKKMKKHRKK.

Belongs to the NPAT family.

It is found in the nucleus. Functionally, required for progression through the G1 and S phases of the cell cycle and for S phase entry. Activates transcription of the histone H2A, histone H2B, histone H3 and histone H4 genes. The polypeptide is Protein NPAT (npat) (Xenopus laevis (African clawed frog)).